The chain runs to 843 residues: Protein PLASTID MOVEMENT IMPAIRED 1 (843 aa).

Residues 30–58 (PQVSVGNRRTNSLALPRSSVPSLVTSADE) are compositionally biased toward polar residues. Disordered stretches follow at residues 30–65 (PQVSVGNRRTNSLALPRSSVPSLVTSADEVSTARAE) and 88–116 (LEVEEEENVTQSNRIVKKPEESSSGSGVK). Residues 131–284 (LVRIGMQKLS…ELALKLGFQI (154 aa)) enclose the C2 NT-type domain. Disordered regions lie at residues 300 to 412 (FGMK…GTIG) and 450 to 472 (MMKDESDGGDGETESQRLDEEEQ). The span at 307 to 336 (KPKNFANSFGRKQSKTSFSVPSPKMTSRSE) shows a compositional bias: polar residues. 2 positions are modified to phosphoserine: Ser-314 and Ser-328. Basic and acidic residues predominate over residues 365-381 (PEEKPVQKNDKPEQRAE). Thr-404 is subject to Phosphothreonine. At Ser-407 the chain carries Phosphoserine. Thr-410 is subject to Phosphothreonine. The segment covering 456–472 (DGGDGETESQRLDEEEQ) has biased composition (acidic residues). Residue Ser-507 is modified to Phosphoserine.

Expressed in leaves, stems, cauline leaves, and flowers but not in roots. Present in leaves in both mesophyll and pavement cells.

It is found in the cytoplasm. Necessary for chloroplast and nuclear photorelocation movements via the regulation of chloroplast-actin (cp-actin) filaments in mesophyll cells, and together with PMIR1, in pavement cells. Required component for both the low- and high-light-dependent chloroplast movement responses via an abscisic acid (ABA) pathway. Involved in the ABA response pathway during seed germination. Modulates ABA accumulation during periods of water deficit at the seedling stage. In Arabidopsis thaliana (Mouse-ear cress), this protein is Protein PLASTID MOVEMENT IMPAIRED 1.